The sequence spans 488 residues: Bifunctional protein GlmU (488 aa).

The pyrophosphorylase stretch occupies residues methionine 1–arginine 237. UDP-N-acetyl-alpha-D-glucosamine is bound by residues leucine 13–glycine 16, lysine 27, glutamine 82, glycine 87–threonine 88, serine 110–aspartate 112, glycine 149, glutamate 164, asparagine 179, and asparagine 235. Aspartate 112 lines the Mg(2+) pocket. Residue asparagine 235 coordinates Mg(2+). Residues valine 238–alanine 258 are linker. Positions glycine 259 to serine 488 are N-acetyltransferase. Arginine 341 and lysine 359 together coordinate UDP-N-acetyl-alpha-D-glucosamine. Histidine 371 serves as the catalytic Proton acceptor. UDP-N-acetyl-alpha-D-glucosamine contacts are provided by tyrosine 374 and asparagine 385. Residues alanine 388, asparagine 394 to tyrosine 395, serine 413, alanine 431, and arginine 448 contribute to the acetyl-CoA site. The interval alanine 459 to serine 488 is disordered. Positions arginine 478–serine 488 are enriched in basic residues.

In the N-terminal section; belongs to the N-acetylglucosamine-1-phosphate uridyltransferase family. It in the C-terminal section; belongs to the transferase hexapeptide repeat family. As to quaternary structure, homotrimer. Mg(2+) serves as cofactor.

The protein localises to the cytoplasm. It catalyses the reaction alpha-D-glucosamine 1-phosphate + acetyl-CoA = N-acetyl-alpha-D-glucosamine 1-phosphate + CoA + H(+). It carries out the reaction N-acetyl-alpha-D-glucosamine 1-phosphate + UTP + H(+) = UDP-N-acetyl-alpha-D-glucosamine + diphosphate. It functions in the pathway nucleotide-sugar biosynthesis; UDP-N-acetyl-alpha-D-glucosamine biosynthesis; N-acetyl-alpha-D-glucosamine 1-phosphate from alpha-D-glucosamine 6-phosphate (route II): step 2/2. Its pathway is nucleotide-sugar biosynthesis; UDP-N-acetyl-alpha-D-glucosamine biosynthesis; UDP-N-acetyl-alpha-D-glucosamine from N-acetyl-alpha-D-glucosamine 1-phosphate: step 1/1. It participates in bacterial outer membrane biogenesis; LPS lipid A biosynthesis. Catalyzes the last two sequential reactions in the de novo biosynthetic pathway for UDP-N-acetylglucosamine (UDP-GlcNAc). The C-terminal domain catalyzes the transfer of acetyl group from acetyl coenzyme A to glucosamine-1-phosphate (GlcN-1-P) to produce N-acetylglucosamine-1-phosphate (GlcNAc-1-P), which is converted into UDP-GlcNAc by the transfer of uridine 5-monophosphate (from uridine 5-triphosphate), a reaction catalyzed by the N-terminal domain. This is Bifunctional protein GlmU from Anaeromyxobacter sp. (strain K).